A 78-amino-acid chain; its full sequence is MSAYCQVTGRKPSFGKSVSHSHRRTNRRWNPNIQRRSFYLPSEGRTITLNVSTKGLKTIDRYGIESVVAKLRARGEKI.

A disordered region spans residues 1-27 (MSAYCQVTGRKPSFGKSVSHSHRRTNR).

Belongs to the bacterial ribosomal protein bL28 family.

This chain is Large ribosomal subunit protein bL28, found in Corynebacterium kroppenstedtii (strain DSM 44385 / JCM 11950 / CIP 105744 / CCUG 35717).